The chain runs to 127 residues: MRHRLSGRQLNRNSSHRQAMFRNMASSLVRHEIIKTTLPKAKELRRVVEPLITLAKTDSVANRRLAFARTRDNAIVAKLFNELGPRYLERAGGYTRILKCGFRAGDNAPMAYIELVDRPAAAEAAAE.

It belongs to the bacterial ribosomal protein bL17 family. Part of the 50S ribosomal subunit. Contacts protein L32.

The chain is Large ribosomal subunit protein bL17 from Aeromonas hydrophila subsp. hydrophila (strain ATCC 7966 / DSM 30187 / BCRC 13018 / CCUG 14551 / JCM 1027 / KCTC 2358 / NCIMB 9240 / NCTC 8049).